A 358-amino-acid polypeptide reads, in one-letter code: Low-specificity L-threonine aldolase 1 (358 aa).

N6-(pyridoxal phosphate)lysine is present on K207.

This sequence belongs to the threonine aldolase family. Requires pyridoxal 5'-phosphate as cofactor. In terms of tissue distribution, expressed in root tips, seedlings, carpels and seeds.

It catalyses the reaction L-threonine = acetaldehyde + glycine. The enzyme catalyses L-allo-threonine = acetaldehyde + glycine. It participates in amino-acid degradation; L-threonine degradation via aldolase pathway; acetaldehyde and glycine from L-threonine: step 1/1. Threonine aldolase involved in threonine degradation to glycine. May play a role in the removal of L-allo-threonine. The protein is Low-specificity L-threonine aldolase 1 of Arabidopsis thaliana (Mouse-ear cress).